The chain runs to 533 residues: Cytochrome P450 monooxygenase ltmK (533 aa).

A helical transmembrane segment spans residues 27-47; sequence VHWLQVIVALLVLIVCIFLYW. Residue asparagine 116 is glycosylated (N-linked (GlcNAc...) asparagine). Cysteine 473 contributes to the heme binding site. N-linked (GlcNAc...) asparagine glycosylation is present at asparagine 528.

The protein belongs to the cytochrome P450 family. It depends on heme as a cofactor.

The protein resides in the membrane. It participates in secondary metabolite biosynthesis. Its function is as follows. Cytochrome P450 monooxygenase; part of the gene clusters that mediates the biosynthesis of lolitrems, indole-diterpene mycotoxins that are potent tremorgens in mammals, and are synthesized by clavicipitaceous fungal endophytes in association with their grass hosts. The geranylgeranyl diphosphate (GGPP) synthase ltmG is proposed to catalyze the first step in lolitrem biosynthesis. LtmG catalyzes a series of iterative condensations of isopentenyl diphosphate (IPP) with dimethylallyl diphosphate (DMAPP), geranyl diphosphate (GPP), and farnesyl diphosphate (FPP), to form GGPP. GGPP then condenses with indole-3-glycerol phosphate to form 3-geranylgeranylindole, an acyclic intermediate, to be incorporated into paxilline. Either ltmG or ltmC could be responsible for this step, as both are putative prenyl transferases. The FAD-dependent monooxygenase ltmM then catalyzes the epoxidation of the two terminal alkenes of the geranylgeranyl moiety, which is subsequently cyclized by ltmB, to paspaline. The cytochrome P450 monooxygenases ltmQ and ltmP can sequentially oxidize paspaline to terpendole E and terpendole F. Alternatively, ltmP converts paspaline to an intermediate which is oxidized by ltmQ to terpendole F. LtmF, ltmK, ltmE and ltmJ appear to be unique to the epichloe endophytes. The prenyltransferase ltmF is involved in the 27-hydroxyl-O-prenylation. The cytochrome P450 monooxygenase ltmK is required for the oxidative acetal ring formation. The multi-functional prenyltransferase ltmE is required for C20- and C21-prenylations of the indole ring of paspalanes and acts together with the cytochrome P450 monooxygenase ltmJ to yield lolitremanes by multiple oxidations and ring closures. The stereoisomer pairs of lolitriol and lolitrem N or lolitrem B and lolitrem F may be attributed to variations in the way in which ring closure can occur under the action of ltmJ. While the major product of this pathway is lolitrem B, the prenyl transferases and cytochrome P450 monooxygenases identified in this pathway have a remarkable versatility in their regio- and stereo-specificities to generate a diverse range of metabolites that are products of a metabolic grid rather than a linear pathway. The chain is Cytochrome P450 monooxygenase ltmK from Epichloe festucae var. lolii (Neotyphodium lolii).